The primary structure comprises 472 residues: Carboxypeptidase E (472 aa).

The first 21 residues, 1-21 (MLHAMRPVLLVAALLAVTAHA), serve as a signal peptide directing secretion. Residues 39 to 359 (HYHNQAQLEA…KSIFEYVWKS (321 aa)) enclose the Peptidase M14 domain. Residues His-101 and Glu-104 each coordinate Zn(2+). Asn-134 carries an N-linked (GlcNAc...) asparagine glycan. His-232 serves as a coordination point for Zn(2+). Catalysis depends on Glu-329, which acts as the Proton donor/acceptor. Residues Asn-385 and Asn-428 are each glycosylated (N-linked (GlcNAc...) asparagine).

The protein belongs to the peptidase M14 family. It depends on Zn(2+) as a cofactor. In terms of tissue distribution, expression is restricted to the nervous system.

The protein resides in the cell projection. Its subcellular location is the axon. It localises to the perikaryon. The protein localises to the cytoplasmic vesicle. It is found in the secretory vesicle lumen. The enzyme catalyses Release of C-terminal arginine or lysine residues from polypeptides.. Functionally, during FMRFamide-like peptide (FaRPs or FLP) and neuropeptide-like protein (NLP) precursor processing, catalyzes the removal of Arg or Lys residues from the C-terminus following the initial endoprotease cleavage. By processing neuropeptides, modulates basal acetylcholine release at the ventral cord neuromuscular junctions. Involved in egg-laying, defecation and locomotion. By processing FLP neuropeptides, regulates the turning step of male mating behavior. Involved in reducing pharyngeal pumping in response to high CO(2) levels. This Caenorhabditis elegans protein is Carboxypeptidase E.